A 442-amino-acid polypeptide reads, in one-letter code: UDP-N-acetylmuramoylalanine--D-glutamate ligase (442 aa).

It belongs to the MurCDEF family.

It localises to the cytoplasm. The catalysed reaction is UDP-N-acetyl-alpha-D-muramoyl-L-alanine + D-glutamate + ATP = UDP-N-acetyl-alpha-D-muramoyl-L-alanyl-D-glutamate + ADP + phosphate + H(+). It functions in the pathway cell wall biogenesis; peptidoglycan biosynthesis. Functionally, cell wall formation. Catalyzes the addition of glutamate to the nucleotide precursor UDP-N-acetylmuramoyl-L-alanine (UMA). The protein is UDP-N-acetylmuramoylalanine--D-glutamate ligase of Buchnera aphidicola subsp. Baizongia pistaciae (strain Bp).